Consider the following 796-residue polypeptide: Protein translocase subunit SecA 2 (796 aa).

ATP contacts are provided by residues Gln-84, 102-106, and Asp-496; that span reads GEGKT.

Belongs to the SecA family. In terms of assembly, monomer and homodimer. Part of the essential Sec protein translocation apparatus which comprises SecA, SecYEG and auxiliary proteins SecDF. Other proteins may also be involved.

Its subcellular location is the cell membrane. The protein resides in the cytoplasm. It catalyses the reaction ATP + H2O + cellular proteinSide 1 = ADP + phosphate + cellular proteinSide 2.. Its function is as follows. Part of the Sec protein translocase complex. Interacts with the SecYEG preprotein conducting channel. Has a central role in coupling the hydrolysis of ATP to the transfer of proteins into and across the cell membrane, serving as an ATP-driven molecular motor driving the stepwise translocation of polypeptide chains across the membrane. The chain is Protein translocase subunit SecA 2 from Staphylococcus aureus (strain Mu3 / ATCC 700698).